A 126-amino-acid polypeptide reads, in one-letter code: UPF0325 protein VFMJ11_2099 (126 aa).

Belongs to the UPF0325 family.

The protein is UPF0325 protein VFMJ11_2099 of Aliivibrio fischeri (strain MJ11) (Vibrio fischeri).